The primary structure comprises 604 residues: Elongation factor 4 (604 aa).

Residues 7 to 189 (KRIRNFCIIA…SVVDRVPPPA (183 aa)) enclose the tr-type G domain. GTP is bound by residues 19–24 (DHGKST) and 136–139 (NKID).

This sequence belongs to the TRAFAC class translation factor GTPase superfamily. Classic translation factor GTPase family. LepA subfamily.

It is found in the cell inner membrane. The enzyme catalyses GTP + H2O = GDP + phosphate + H(+). In terms of biological role, required for accurate and efficient protein synthesis under certain stress conditions. May act as a fidelity factor of the translation reaction, by catalyzing a one-codon backward translocation of tRNAs on improperly translocated ribosomes. Back-translocation proceeds from a post-translocation (POST) complex to a pre-translocation (PRE) complex, thus giving elongation factor G a second chance to translocate the tRNAs correctly. Binds to ribosomes in a GTP-dependent manner. In Synechococcus sp. (strain CC9311), this protein is Elongation factor 4.